Consider the following 416-residue polypeptide: CinA-like protein (416 aa).

The protein belongs to the CinA family.

The protein is CinA-like protein of Nostoc punctiforme (strain ATCC 29133 / PCC 73102).